The chain runs to 229 residues: Chloride conductance regulatory protein ICln (229 aa).

It belongs to the pICln (TC 1.A.47) family. As to quaternary structure, homooligomer.

The protein resides in the cytoplasm. It is found in the nucleus. Functionally, may participate in cellular volume control by activation of a swelling-induced chloride conductance pathway. The chain is Chloride conductance regulatory protein ICln from Arabidopsis thaliana (Mouse-ear cress).